The primary structure comprises 400 residues: Gap junction alpha-8 protein (400 aa).

Residues 2 to 12 (GDWSFLGNILE) lie within the membrane without spanning it. At 13–21 (QVNEQSTVI) the chain is on the cytoplasmic side. A helical transmembrane segment spans residues 22 to 42 (GRVWLTVLFIFRILILGTAAE). Topologically, residues 43–71 (LVWGDEQSDFVCNTQQPGCENVCYDEAFP) are extracellular. 3 disulfides stabilise this stretch: Cys-54/Cys-196, Cys-61/Cys-190, and Cys-65/Cys-185. The helical transmembrane segment at 72 to 92 (ISHIRLWVLQIIFVSTPSLVY) threads the bilayer. The Cytoplasmic segment spans residues 93-156 (FGHAVHHVRM…GTLLRTYILH (64 aa)). Over residues 104–118 (EKRKEREEAERRQQA) the composition is skewed to basic and acidic residues. Residues 104-139 (EKRKEREEAERRQQAEVDEEKLPLAPNQNKGNNPDG) form a disordered region. Residues 129-138 (PNQNKGNNPD) show a composition bias toward polar residues. A helical membrane pass occupies residues 157–177 (IIFKTLFEVGFIVGQYFLYGF). At 178 to 205 (RILPLYRCGRWPCPNLVDCFVSRPTEKT) the chain is on the extracellular side. Residues 206 to 226 (IFIMFMLVVAAVSLFLNLVEI) form a helical membrane-spanning segment. Residues 227 to 400 (SHLILKRIRR…SRARSDDLTV (174 aa)) are Cytoplasmic-facing. Residues 323–400 (YAQAKEPEEE…SRARSDDLTV (78 aa)) form a disordered region. Residues 327-336 (KEPEEEKVKA) show a composition bias toward basic and acidic residues. Acidic residues predominate over residues 337-346 (EEEEEQEEEQ). A Phosphoserine; by CK2 modification is found at Ser-364. Residues 381-392 (RSLSRLSKASSR) show a composition bias toward low complexity.

This sequence belongs to the connexin family. Alpha-type (group II) subfamily. A hemichannel or connexon is composed of a hexamer of connexins. A functional gap junction is formed by the apposition of two hemichannels. Forms heteromeric channels with GJA3. During early stages of lens development, interacts with the C-terminus of MIP. Post-translationally, proteolytically cleaved by caspase-3 during lens development. Phosphorylated on Ser-364; which inhibits cleavage by caspase-3.

The protein resides in the cell membrane. It localises to the cell junction. It is found in the gap junction. Structural component of eye lens gap junctions. Gap junctions are dodecameric channels that connect the cytoplasm of adjoining cells. They are formed by the docking of two hexameric hemichannels, one from each cell membrane. Small molecules and ions diffuse from one cell to a neighboring cell via the central pore. The sequence is that of Gap junction alpha-8 protein (GJA8) from Gallus gallus (Chicken).